We begin with the raw amino-acid sequence, 204 residues long: Molybdenum cofactor guanylyltransferase (204 aa).

GTP is bound by residues 10 to 12 (LAG), lysine 23, asparagine 51, aspartate 69, and aspartate 99. Aspartate 99 contacts Mg(2+).

The protein belongs to the MobA family. Monomer. Mg(2+) serves as cofactor.

It is found in the cytoplasm. The catalysed reaction is Mo-molybdopterin + GTP + H(+) = Mo-molybdopterin guanine dinucleotide + diphosphate. Its function is as follows. Transfers a GMP moiety from GTP to Mo-molybdopterin (Mo-MPT) cofactor (Moco or molybdenum cofactor) to form Mo-molybdopterin guanine dinucleotide (Mo-MGD) cofactor. The sequence is that of Molybdenum cofactor guanylyltransferase from Shewanella piezotolerans (strain WP3 / JCM 13877).